The primary structure comprises 61 residues: Small ribosomal subunit protein uS14 (61 aa).

The Zn(2+) site is built by C24, C27, C40, and C43.

This sequence belongs to the universal ribosomal protein uS14 family. Zinc-binding uS14 subfamily. As to quaternary structure, part of the 30S ribosomal subunit. Contacts proteins S3 and S10. Zn(2+) is required as a cofactor.

In terms of biological role, binds 16S rRNA, required for the assembly of 30S particles and may also be responsible for determining the conformation of the 16S rRNA at the A site. This chain is Small ribosomal subunit protein uS14, found in Geobacillus stearothermophilus (Bacillus stearothermophilus).